A 643-amino-acid chain; its full sequence is MGDLENLLLEAAGRTNSAGRSRHPPSSRRREGSYSDGSSDSRDDSDEDRGYASRKPSGSQVPLKKRLEAEREDRAARVEGGYGDGPSDREGDSSEESDFGDDLYKNEEDRQKLAGMTEFQREMILSERADKKGDKNFTEKLRSKRESEKTPVSKKETQPLPASRGVRSSARSADRAAAKDDALNELRAKRMKQQDPAALRKLRDASKGGSGSRDFSSTKRKPLASSNLSSSSQSDSDSRSQSDDEGSNGGMLDSDDDRSDVPTFEDVKEVTIRRSKLAKWLMEPFFEELIVGCFVRVGIGRSKSGPIYRLCWVKNVDATDPDKTYKLENKTTHKYLNVVWGNETSAARWQMAMISDGHPLEEEYRQWIREVERTNGRMPTKQDISEKKEAIQRTNSFVYSAETVKQMLQEKKSASVRPMNVAAEKDRLRKELEIAQSKNDEAGVERIKSKIKQLDASRNKKGVDKKALKLAEMNKKNRAENFKNASEVKSITASLKAGEAGYDPFSRRWTRSSNYYNGKNKGKDGEENEAAVAAAVETNGADAGAGVEATEAALEAAAEAGKLIDTRAPIGQGAEHNQLHNFELSLSLTALQKYGGPQGVQKAFMARKQLTEATVGCRVAENDGKRHGLTLTVSDYKRRRGLL.

2 disordered regions span residues 1–107 (MGDL…YKNE) and 124–262 (ILSE…SDVP). Residue Gly-2 is modified to N-acetylglycine. Residues 65–77 (KRLEAEREDRAAR) show a composition bias toward basic and acidic residues. The residue at position 87 (Ser-87) is a Phosphoserine. The span at 124-157 (ILSERADKKGDKNFTEKLRSKRESEKTPVSKKET) shows a compositional bias: basic and acidic residues. Positions 162–171 (ASRGVRSSAR) are enriched in low complexity. The span at 172–188 (SADRAAAKDDALNELRA) shows a compositional bias: basic and acidic residues. The segment covering 225–235 (SSNLSSSSQSD) has biased composition (low complexity). Residues 261–396 (VPTFEDVKEV…KKEAIQRTNS (136 aa)) form the Plus3 domain.

As to quaternary structure, component of the nuclear PAF1 complex (PAF1C), which consists of VIP2/ELF7/PAF1, VIP3/SKI8/WDR61, VIP4/LEO1, VIP5/RTF1, VIP6/ELF8/CTR9 and CDC73.

Its subcellular location is the nucleus. Component of the PAF1 complex (PAF1C) which is involved in histone modifications such as methylation on histone H3 'Lys-4' (H3K4me3). Involved in regulation of flowering time. Required for the expression of the flowering repressors and FLC and MADS-box genes of the MAF family. Involved in the control of seed dormancy and germination. This is Protein RTF1 homolog from Arabidopsis thaliana (Mouse-ear cress).